We begin with the raw amino-acid sequence, 284 residues long: Formamidopyrimidine-DNA glycosylase (284 aa).

Catalysis depends on Pro-2, which acts as the Schiff-base intermediate with DNA. Residue Glu-3 is the Proton donor of the active site. Lys-60 functions as the Proton donor; for beta-elimination activity in the catalytic mechanism. His-94 and Arg-113 together coordinate DNA. The FPG-type zinc-finger motif lies at 243–277; the sequence is WVYGRKGEACRVCGTTIERLRLAGRSSHYCPQCQP. The active-site Proton donor; for delta-elimination activity is Arg-267.

Belongs to the FPG family. In terms of assembly, monomer. Zn(2+) is required as a cofactor.

It catalyses the reaction Hydrolysis of DNA containing ring-opened 7-methylguanine residues, releasing 2,6-diamino-4-hydroxy-5-(N-methyl)formamidopyrimidine.. The catalysed reaction is 2'-deoxyribonucleotide-(2'-deoxyribose 5'-phosphate)-2'-deoxyribonucleotide-DNA = a 3'-end 2'-deoxyribonucleotide-(2,3-dehydro-2,3-deoxyribose 5'-phosphate)-DNA + a 5'-end 5'-phospho-2'-deoxyribonucleoside-DNA + H(+). Its function is as follows. Involved in base excision repair of DNA damaged by oxidation or by mutagenic agents. Acts as a DNA glycosylase that recognizes and removes damaged bases. Has a preference for oxidized purines, such as 7,8-dihydro-8-oxoguanine (8-oxoG). Has AP (apurinic/apyrimidinic) lyase activity and introduces nicks in the DNA strand. Cleaves the DNA backbone by beta-delta elimination to generate a single-strand break at the site of the removed base with both 3'- and 5'-phosphates. This Thermosynechococcus vestitus (strain NIES-2133 / IAM M-273 / BP-1) protein is Formamidopyrimidine-DNA glycosylase (mutM).